Consider the following 262-residue polypeptide: Thiazole synthase (262 aa).

The Schiff-base intermediate with DXP role is filled by K105. Residues G166, 192 to 193 (AG), and 214 to 215 (NT) each bind 1-deoxy-D-xylulose 5-phosphate.

This sequence belongs to the ThiG family. As to quaternary structure, homotetramer. Forms heterodimers with either ThiH or ThiS.

It is found in the cytoplasm. It carries out the reaction [ThiS sulfur-carrier protein]-C-terminal-Gly-aminoethanethioate + 2-iminoacetate + 1-deoxy-D-xylulose 5-phosphate = [ThiS sulfur-carrier protein]-C-terminal Gly-Gly + 2-[(2R,5Z)-2-carboxy-4-methylthiazol-5(2H)-ylidene]ethyl phosphate + 2 H2O + H(+). It functions in the pathway cofactor biosynthesis; thiamine diphosphate biosynthesis. In terms of biological role, catalyzes the rearrangement of 1-deoxy-D-xylulose 5-phosphate (DXP) to produce the thiazole phosphate moiety of thiamine. Sulfur is provided by the thiocarboxylate moiety of the carrier protein ThiS. In vitro, sulfur can be provided by H(2)S. The chain is Thiazole synthase from Phenylobacterium zucineum (strain HLK1).